Reading from the N-terminus, the 130-residue chain is S-adenosylmethionine decarboxylase proenzyme (130 aa).

Residue Ser-63 is the Schiff-base intermediate with substrate; via pyruvic acid of the active site. A Pyruvic acid (Ser); by autocatalysis modification is found at Ser-63. The Proton acceptor; for processing activity role is filled by His-68. The active-site Proton donor; for catalytic activity is Cys-83.

It belongs to the prokaryotic AdoMetDC family. Type 1 subfamily. As to quaternary structure, heterotetramer of two alpha and two beta chains arranged as a dimer of alpha/beta heterodimers. It depends on pyruvate as a cofactor. Is synthesized initially as an inactive proenzyme. Formation of the active enzyme involves a self-maturation process in which the active site pyruvoyl group is generated from an internal serine residue via an autocatalytic post-translational modification. Two non-identical subunits are generated from the proenzyme in this reaction, and the pyruvate is formed at the N-terminus of the alpha chain, which is derived from the carboxyl end of the proenzyme. The post-translation cleavage follows an unusual pathway, termed non-hydrolytic serinolysis, in which the side chain hydroxyl group of the serine supplies its oxygen atom to form the C-terminus of the beta chain, while the remainder of the serine residue undergoes an oxidative deamination to produce ammonia and the pyruvoyl group blocking the N-terminus of the alpha chain.

The catalysed reaction is S-adenosyl-L-methionine + H(+) = S-adenosyl 3-(methylsulfanyl)propylamine + CO2. It functions in the pathway amine and polyamine biosynthesis; S-adenosylmethioninamine biosynthesis; S-adenosylmethioninamine from S-adenosyl-L-methionine: step 1/1. Its function is as follows. Catalyzes the decarboxylation of S-adenosylmethionine to S-adenosylmethioninamine (dcAdoMet), the propylamine donor required for the synthesis of the polyamines spermine and spermidine from the diamine putrescine. This Thermotoga petrophila (strain ATCC BAA-488 / DSM 13995 / JCM 10881 / RKU-1) protein is S-adenosylmethionine decarboxylase proenzyme.